The primary structure comprises 680 residues: MDFYNSYSQGFVRVAACTHHASIGDPTTNAASVLRLARQCHDDGVAVAVFPELTLSGYSIEDILLQDLLLEAVEDTVLDIVVASADLLPVLVIGAPLRYRHRIYNTAVIIHRGVVLGVAPKSYLPTYREFYERRQLAPGDDEHGTIGIGDLRAPFGPDLLFAAADLLGLVLHVEICEDMFVPVPPSAEAALAGATVLANLSGSPITIGRAEDRRLLARSASLRCLAAYVYAAAGEGESTTDLAWDGQTMIWENGVLLAESERFPKGEHRSVADVDTELLRSERLRMGTFNDNRRRHRALVEPFRRIEFRLEPPVGNIGLLREVERFPFVPADPQRLQQDCYEAYNIQVSGLEQRLRALDYPKVVIGVSGGLDSTHALIVAARAMDREGRPRSDILAFTLPGFVTGDRTKSNATELCRALGVTFTEIDIRDTATLMLKKIGHPFSRGEVSYDVTFENVQAGVRTDYLFRLANQHGGIVLGTGDLSELGLGWSTYGVGDQMSHYNINAGVPKTLVQHLIRWVIASSQFEEQVDKVLQSVLDTEITPELIPSDGEEKLQSTEAKVGPFALQDFSLFQVLRYGFRPSKIAFLTWHAWSDPNCGKWPPGFPEDKRLSYSLKEIRHWLQIFVQRFYSFSQFKRSALPNGPKVSHGGALSPRGDWRAPSDMSARIWLDEIEREVPEE.

In terms of domain architecture, CN hydrolase spans 12-276 (VRVAACTHHA…EHRSVADVDT (265 aa)). Catalysis depends on Glu52, which acts as the Proton acceptor; for glutaminase activity. Catalysis depends on Lys121, which acts as the For glutaminase activity. Position 127 (Tyr127) interacts with L-glutamine. Cys176 functions as the Nucleophile; for glutaminase activity in the catalytic mechanism. Ser203 and Arg209 together coordinate L-glutamine. 366 to 373 (GVSGGLDS) is an ATP binding site. Asn456 contacts deamido-NAD(+). Thr480 serves as a coordination point for ATP. Residues Glu485, 490–493 (WSTY), and Lys636 contribute to the deamido-NAD(+) site.

The protein in the C-terminal section; belongs to the NAD synthetase family.

It catalyses the reaction deamido-NAD(+) + L-glutamine + ATP + H2O = L-glutamate + AMP + diphosphate + NAD(+) + H(+). It functions in the pathway cofactor biosynthesis; NAD(+) biosynthesis; NAD(+) from deamido-NAD(+) (L-Gln route): step 1/1. Functionally, catalyzes the ATP-dependent amidation of deamido-NAD to form NAD. Uses L-glutamine as a nitrogen source. This Mycobacterium leprae (strain TN) protein is Glutamine-dependent NAD(+) synthetase.